The primary structure comprises 297 residues: N-acetylmuramic acid 6-phosphate etherase (297 aa).

In terms of domain architecture, SIS spans 55–218 (AVAALKSGGR…STGAMVKFGK (164 aa)). E83 (proton donor) is an active-site residue. Residue E114 is part of the active site.

The protein belongs to the GCKR-like family. MurNAc-6-P etherase subfamily. Homodimer.

The enzyme catalyses N-acetyl-D-muramate 6-phosphate + H2O = N-acetyl-D-glucosamine 6-phosphate + (R)-lactate. The protein operates within amino-sugar metabolism; 1,6-anhydro-N-acetylmuramate degradation. It participates in amino-sugar metabolism; N-acetylmuramate degradation. Its pathway is cell wall biogenesis; peptidoglycan recycling. In terms of biological role, specifically catalyzes the cleavage of the D-lactyl ether substituent of MurNAc 6-phosphate, producing GlcNAc 6-phosphate and D-lactate. Together with AnmK, is also required for the utilization of anhydro-N-acetylmuramic acid (anhMurNAc) either imported from the medium or derived from its own cell wall murein, and thus plays a role in cell wall recycling. The protein is N-acetylmuramic acid 6-phosphate etherase of Salmonella dublin (strain CT_02021853).